Here is a 401-residue protein sequence, read N- to C-terminus: MFDKQEFVSKLVTEEKAKIVLLVMDGLGDIPVNGKTPLQAANTPNLDNLAKESDLGQTIPVLPGITPGSGPGHLSLFGYDPIKYQIGRGILEALGIGVEVGEKDVVARANFATWDGKVVLDRRAGRPATEESAKVVQLLSEKIKKIEDVEITFYPGKEHRFVVKFTGEGLGDKVTDADPQKEGHPMVWAEGLDEPSKKTARIVNELIKKIAEVLKDNPKINFALIRGFSKYPDLPKFPQVYKMKAGAIATYPMYRGLAKLVGMEIIETGQTVADEIKTLKEKWNDYDFFYVHVKKTDSYGEDGKFEEKVKVIEEVDAIIPEIVSLNPDVLVITGDHSTPVPLKAHSWHPVPLLIWSKYTRRGLSQAFNEFECARGTLGTIHASDVMTLALAYAGKLEKFGA.

Belongs to the BPG-independent phosphoglycerate mutase family. A-PGAM subfamily.

It carries out the reaction (2R)-2-phosphoglycerate = (2R)-3-phosphoglycerate. It functions in the pathway carbohydrate degradation; glycolysis; pyruvate from D-glyceraldehyde 3-phosphate: step 3/5. Its function is as follows. Catalyzes the interconversion of 2-phosphoglycerate and 3-phosphoglycerate. The protein is Probable 2,3-bisphosphoglycerate-independent phosphoglycerate mutase of Thermotoga maritima (strain ATCC 43589 / DSM 3109 / JCM 10099 / NBRC 100826 / MSB8).